The sequence spans 341 residues: L-threonine 3-dehydrogenase (341 aa).

Cys38 provides a ligand contact to Zn(2+). Active-site charge relay system residues include Thr40 and His43. The Zn(2+) site is built by His63, Glu64, Cys93, Cys96, Cys99, and Cys107. NAD(+) is bound by residues Ile175, Asp195, Arg200, 262 to 264 (LGI), and 286 to 287 (IY).

It belongs to the zinc-containing alcohol dehydrogenase family. Homotetramer. Zn(2+) serves as cofactor.

Its subcellular location is the cytoplasm. It catalyses the reaction L-threonine + NAD(+) = (2S)-2-amino-3-oxobutanoate + NADH + H(+). The protein operates within amino-acid degradation; L-threonine degradation via oxydo-reductase pathway; glycine from L-threonine: step 1/2. Its function is as follows. Catalyzes the NAD(+)-dependent oxidation of L-threonine to 2-amino-3-ketobutyrate. This is L-threonine 3-dehydrogenase from Shewanella frigidimarina (strain NCIMB 400).